The sequence spans 236 residues: V-set and transmembrane domain-containing protein 2A (236 aa).

The signal sequence occupies residues 1–24; that stretch reads MMGIFLVYVGFVFFSVLYVQQGLS. An Ig-like V-type domain is found at 27–143; the sequence is AKFTEFPRNV…YGELQEHKAQ (117 aa). Asn35 is a glycosylation site (N-linked (GlcNAc...) asparagine). Residues Cys48 and Cys127 are joined by a disulfide bond. N-linked (GlcNAc...) asparagine glycosylation is present at Asn175. Residues 184–199 are compositionally biased toward polar residues; sequence IHGSANQRTHSTSSPQ. The tract at residues 184–206 is disordered; the sequence is IHGSANQRTHSTSSPQVVAKIPK.

In terms of assembly, homodimer. N-glycosylated. N-linked glycosylation is critical for secretion but not for preadipocyte cell differentiation activity.

The protein localises to the secreted. Its function is as follows. Plays a role in the regulation of the early stage of white and brown preadipocyte cell differentiation. Promotes adipogenic commitment of preadipocytes by increasing gene expression of the transcription factor PPARG in a BMP4-dependent signaling pathway. This is V-set and transmembrane domain-containing protein 2A from Homo sapiens (Human).